The primary structure comprises 427 residues: MTDTGFFTETLDSRDPDIFGAIRKELGRQRDEIELIASENIVSRAVLEAQGSVLTNKYAEGYPGKRYYGGCQYVDIVEELAIERAKQLFGCEFANVQPNSGSQMNQAVFLALLQPGDTFMGLDLNSGGHLTHGSPVNMSGKWFNVVSYGVRQQDQLLDMDEIRKKAHEHKPKLILAGGTAYSRVWDWAEFRKIADEVGAWLMVDMAHIAGLVAGGQHPSPLPNAHVVTTTTHKSLRGPRGGMVLTNDADIAKKINSAVFPGLQGGPLMHVIAAKAVAFGEALRPDFKDYAAQVVANARAMADELMKGGIDIVSGGTDNHLCLADLRPKGVTGKATEAALGRAHITCNKNGVPFDPEKPFVTSGIRLGAPAGTTRGFKEDEFRQIARWIVEVVDGLAANGEEGNAEVEARVKAEVEALCARFPLYNGL.

(6S)-5,6,7,8-tetrahydrofolate-binding positions include L124 and 128-130 (GHL). K233 bears the N6-(pyridoxal phosphate)lysine mark.

The protein belongs to the SHMT family. As to quaternary structure, homodimer. Pyridoxal 5'-phosphate serves as cofactor.

It localises to the cytoplasm. The catalysed reaction is (6R)-5,10-methylene-5,6,7,8-tetrahydrofolate + glycine + H2O = (6S)-5,6,7,8-tetrahydrofolate + L-serine. Its pathway is one-carbon metabolism; tetrahydrofolate interconversion. The protein operates within amino-acid biosynthesis; glycine biosynthesis; glycine from L-serine: step 1/1. Functionally, catalyzes the reversible interconversion of serine and glycine with tetrahydrofolate (THF) serving as the one-carbon carrier. This reaction serves as the major source of one-carbon groups required for the biosynthesis of purines, thymidylate, methionine, and other important biomolecules. Also exhibits THF-independent aldolase activity toward beta-hydroxyamino acids, producing glycine and aldehydes, via a retro-aldol mechanism. The chain is Serine hydroxymethyltransferase from Paracoccus denitrificans (strain Pd 1222).